We begin with the raw amino-acid sequence, 142 residues long: Putative mating-type transcription factor (142 aa).

Its subcellular location is the nucleus. The protein is Putative mating-type transcription factor of Eremothecium gossypii (strain ATCC 10895 / CBS 109.51 / FGSC 9923 / NRRL Y-1056) (Yeast).